Reading from the N-terminus, the 189-residue chain is MAKSQNKESPELRTPNRFITDHDASGLSVFNTSIPDALPAQVIGGRDRFHLAYATTTSPVDLTNQSDIVTYSSFLSTPPGISLPGGSVLRIVDVRPGGESLMHRTESIDYGVVLDGEIDLVLDSGESRILKRGDVAVQRGTNHLWRNRSHTAWGRMVFVTLEAKPIEIDGKLLGGVTGLGMDDTSPAGN.

It belongs to the oryJ family.

In terms of biological role, part of the gene cluster that mediates the biosynthesis of the phomopsins, a group of hexapeptide mycotoxins which infects lupins and causes lupinosis disease in livestock. The role of phomC' within the phomopsins biosynthesis pathway has still to be determined. The pathway starts with the processing of the precursor phomA by several endopeptidases including kexin proteases as well as the cluster-specific S41 family peptidase phomP1 and the oligopeptidase phomG to produce 10 identical copies of the hexapeptide Tyr-Val-Ile-Pro-Ile-Asp. After being excised from the precursor peptide, the core peptides are cyclized and modified post-translationally by enzymes encoded within the gene cluster. The timing and order of proteolysis of the phomA precursor and PTMs are still unknown. Two tyrosinase-like enzymes, phomQ1 and phomQ2, catalyze the chlorination and hydroxylation of Tyr, respectively. PhomYb, is proposed to be involved in the construction of the macrocyclic structure. The other 4 ustYa family proteins may be involved in PTMs that generate the unique structure of phomopsin A. PhomYa is required for the hydroxylation of C-beta of Tyr. PhomYc, phomYd, and phomYe are responsible for the biosynthesis of 2,3-dehydroisoleucine (dIle), 2,3-dehydroaspartic acid (dAsp), and 3,4-dehydroproline (dPro), respectively. While dIle formation by phomYc is indispensable for the installation of dAsp by phomYd, the order of the other PTMs have not been elucidated yet. Most of the biosynthetic enzymes likely have broad substrate specificity, and thus, there might be a metabolic grid from a precursor to phomopsin A. The enzyme(s) responsible for the biosynthesis of 3,4-dehydrovaline (dVal) have also not been identified yet. Finally, phomM acts as an S-adenosylmethionine-dependent alpha-N-methyltransferase that catalyzes two successive N-methylation reactions, converting N-desmethyl-phomopsin A to phomopsin A and phomopsin A further to an N,N-dimethylated congener called phomopsin E. This chain is Phomopsin biosynthesis cluster protein C', found in Diaporthe leptostromiformis (Lupinosis disease fungus).